The primary structure comprises 252 residues: Vitamin B12 import ATP-binding protein BtuD (252 aa).

The 236-residue stretch at 2-237 folds into the ABC transporter domain; it reads IQIKSLSVGA…EQLESVFNTQ (236 aa). Position 30 to 37 (30 to 37) interacts with ATP; sequence GPNGSGKS.

The protein belongs to the ABC transporter superfamily. Vitamin B12 importer (TC 3.A.1.13.1) family. The complex is composed of two ATP-binding proteins (BtuD), two transmembrane proteins (BtuC) and a solute-binding protein (BtuF).

It localises to the cell inner membrane. It catalyses the reaction an R-cob(III)alamin(out) + ATP + H2O = an R-cob(III)alamin(in) + ADP + phosphate + H(+). Its function is as follows. Part of the ABC transporter complex BtuCDF involved in vitamin B12 import. Responsible for energy coupling to the transport system. The sequence is that of Vitamin B12 import ATP-binding protein BtuD from Vibrio atlanticus (strain LGP32) (Vibrio splendidus (strain Mel32)).